The primary structure comprises 917 residues: Envelope glycoprotein B (917 aa).

The first 22 residues, 1–22 (MAISRRSLHAIILTVLLLAATA), serve as a signal peptide directing secretion. A compositionally biased stretch (low complexity) spans 21-30 (TAAPSQSGSR). Residues 21–117 (TAAPSQSGSR…SGNASEPADP (97 aa)) form a disordered region. Residues 23–792 (APSQSGSRSR…SGVSSFLSNP (770 aa)) lie on the Virion surface side of the membrane. Over residues 38 to 49 (ERQSTNRGRDNN) the composition is skewed to basic and acidic residues. Residues Asn-48, Asn-110, and Asn-164 are each glycosylated (N-linked (GlcNAc...) asparagine; by host). Disulfide bonds link Cys-139–Cys-591, Cys-156–Cys-547, Cys-230–Cys-294, Cys-387–Cys-435, and Cys-614–Cys-651. Involved in fusion and/or binding to host membrane stretches follow at residues 196-202 (VWSGYSY) and 281-288 (GSAWIHRH). N-linked (GlcNAc...) asparagine; by host glycans are attached at residues Asn-421, Asn-453, and Asn-505. N-linked (GlcNAc...) asparagine; by host glycosylation is present at Asn-692. Residues 737 to 790 (IDTVIKADPNAAIFAGLHGFFEGLGDVGRAVGRVVLGVVGGVVATVSGVSSFLS) are hydrophobic membrane proximal region. Residues 793–813 (FGALAIGLLVLGGLVAAFFAF) form a helical membrane-spanning segment. Over 814–917 (RYVMRLQRNP…EALPETDEDI (104 aa)) the chain is Intravirion. Residues 865–868 (YMAL) carry the Golgi targeting motif. Positions 907–910 (YEAL) match the Internalization motif motif.

Belongs to the herpesviridae glycoprotein B family. In terms of assembly, homotrimer; disulfide-linked. Binds to heparan sulfate proteoglycans. Interacts with gH/gL heterodimer. Post-translationally, a proteolytic cleavage by host furin generates two subunits that remain linked by disulfide bonds.

The protein resides in the virion membrane. The protein localises to the host cell membrane. It localises to the host endosome membrane. It is found in the host Golgi apparatus membrane. Functionally, envelope glycoprotein that forms spikes at the surface of virion envelope. Essential for the initial attachment to heparan sulfate moieties of the host cell surface proteoglycans. Involved in fusion of viral and cellular membranes leading to virus entry into the host cell. Following initial binding to its host receptors, membrane fusion is mediated by the fusion machinery composed at least of gB and the heterodimer gH/gL. May be involved in the fusion between the virion envelope and the outer nuclear membrane during virion egress. The chain is Envelope glycoprotein B from Bovine herpesvirus 2 (strain BMV) (BoHV-2).